The chain runs to 432 residues: Gamma-glutamyl phosphate reductase (432 aa).

It belongs to the gamma-glutamyl phosphate reductase family.

Its subcellular location is the cytoplasm. The enzyme catalyses L-glutamate 5-semialdehyde + phosphate + NADP(+) = L-glutamyl 5-phosphate + NADPH + H(+). The protein operates within amino-acid biosynthesis; L-proline biosynthesis; L-glutamate 5-semialdehyde from L-glutamate: step 2/2. In terms of biological role, catalyzes the NADPH-dependent reduction of L-glutamate 5-phosphate into L-glutamate 5-semialdehyde and phosphate. The product spontaneously undergoes cyclization to form 1-pyrroline-5-carboxylate. This is Gamma-glutamyl phosphate reductase from Clavibacter michiganensis subsp. michiganensis (strain NCPPB 382).